Reading from the N-terminus, the 303-residue chain is Mycothiol acetyltransferase (303 aa).

2 N-acetyltransferase domains span residues 1 to 150 (MALL…RPLD) and 162 to 303 (VTIR…QFGR). Glu-18 is a 1D-myo-inositol 2-(L-cysteinylamino)-2-deoxy-alpha-D-glucopyranoside binding site. 77–79 (LAV) is a binding site for acetyl-CoA. The 1D-myo-inositol 2-(L-cysteinylamino)-2-deoxy-alpha-D-glucopyranoside site is built by Glu-189, Lys-229, and Glu-237. Acetyl-CoA-binding positions include 241–243 (VGV) and 248–254 (QGNGLGR). Residue Tyr-275 coordinates 1D-myo-inositol 2-(L-cysteinylamino)-2-deoxy-alpha-D-glucopyranoside. 280-285 (NTAAIK) is an acetyl-CoA binding site.

Belongs to the acetyltransferase family. MshD subfamily. In terms of assembly, monomer.

It carries out the reaction 1D-myo-inositol 2-(L-cysteinylamino)-2-deoxy-alpha-D-glucopyranoside + acetyl-CoA = mycothiol + CoA + H(+). Catalyzes the transfer of acetyl from acetyl-CoA to desacetylmycothiol (Cys-GlcN-Ins) to form mycothiol. The chain is Mycothiol acetyltransferase from Saccharopolyspora erythraea (strain ATCC 11635 / DSM 40517 / JCM 4748 / NBRC 13426 / NCIMB 8594 / NRRL 2338).